Consider the following 1761-residue polypeptide: Nonribosomal peptide synthetase 6 (1761 aa).

The interval 63 to 468 is adenylation; it reads ERAALHPEKI…GRQDQQVKLR (406 aa). The Carrier 1 domain maps to 600-675; it reads EATTEMELKL…SMAEKAKPVS (76 aa). O-(pantetheine 4'-phosphoryl)serine is present on serine 636. The interval 712-1135 is condensation 1; it reads VEDVYPCTPL…AVLDPVEAQD (424 aa). Carrier domains follow at residues 1169–1242 and 1237–1313; these read SPNE…SNER and SASN…EEET. Serine 1203 and serine 1274 each carry O-(pantetheine 4'-phosphoryl)serine. A condensation 2 region spans residues 1354–1677; sequence IYPTRPLQQL…ESVQWFDTVV (324 aa).

The protein belongs to the NRP synthetase family.

The protein operates within siderophore biosynthesis. Nonribosomal peptide synthetase; part of the gene cluster that mediates the biosynthesis of hydroxamate-containing siderophores that play a critical role in virulence. Cochliobolus heterostrophus produces extracellular coprogen-type siderophores including coprogen, neocoprogen I and neocoprogen II, as well as the intracellular siderophore ferricrocin. The role of extracellular siderophores is to supply iron to the fungus during plant infection, and the intracellular ferricrocin is required for intracellular iron distribution and storage with a crucial role in ascus and ascospore development. SIDA2 catalyzes the conversion of L-ornithine to N(5)-hydroxyornithine, the first step in the biosynthesis of all hydroxamate-containing siderophores. The assembly of extracellular coprogen-type siderophores is then performed by the nonribosomal peptide synthetase (NRPS) NPS6 whereas the intracellular siderophore ferricrocin is assembled by NPS2. This Cochliobolus heterostrophus (strain C4 / ATCC 48331 / race T) (Southern corn leaf blight fungus) protein is Nonribosomal peptide synthetase 6.